Consider the following 369-residue polypeptide: Protein arginine N-methyltransferase 1-A (369 aa).

In terms of domain architecture, SAM-dependent MTase PRMT-type spans 48–369 (KDYYFDSYAH…LSCSTDYRMR (322 aa)). His61, Arg70, Gly94, Glu116, and Glu145 together coordinate S-adenosyl-L-methionine. Residues Glu160 and Glu169 contribute to the active site.

This sequence belongs to the class I-like SAM-binding methyltransferase superfamily. Protein arginine N-methyltransferase family. As to quaternary structure, homodimer. Homooctamer; individual homodimers associates to form a homooctamer and homooligomerization is required for proper localization to the cell membrane. Individual homodimers can associate to form a homohexamer. Component of a complex with lsm14a/rap55a. Interacts with cirbp.

The protein localises to the nucleus. Its subcellular location is the nucleoplasm. It localises to the cytoplasm. The protein resides in the cytosol. It carries out the reaction L-arginyl-[protein] + 2 S-adenosyl-L-methionine = N(omega),N(omega)-dimethyl-L-arginyl-[protein] + 2 S-adenosyl-L-homocysteine + 2 H(+). It catalyses the reaction L-arginyl-[protein] + S-adenosyl-L-methionine = N(omega)-methyl-L-arginyl-[protein] + S-adenosyl-L-homocysteine + H(+). The enzyme catalyses N(omega)-methyl-L-arginyl-[protein] + S-adenosyl-L-methionine = N(omega),N(omega)-dimethyl-L-arginyl-[protein] + S-adenosyl-L-homocysteine + H(+). In terms of biological role, arginine methyltransferase that methylates (mono and asymmetric dimethylation) the guanidino nitrogens of arginyl residues present in target proteins. Constitutes the main enzyme that mediates monomethylation and asymmetric dimethylation of histone H4 'Arg-4' (H4R3me1 and H4R3me2a, respectively), a specific tag for epigenetic transcriptional activation. Methylates cirbp to regulate its subcellular location. Acts transiently during metamorphosis as a transcription coactivator, enhancing thyroid hormone (T3) receptor (TR)-mediated transcription by enhancing TR binding to the T3 response element (TRE), and histone modification through recruitment of other coactivators. This chain is Protein arginine N-methyltransferase 1-A (prmt1-a), found in Xenopus laevis (African clawed frog).